We begin with the raw amino-acid sequence, 848 residues long: Protein SEY1 (848 aa).

The Cytoplasmic portion of the chain corresponds to 1–733 (MNGNFAAVGS…KRGALGGMTQ (733 aa)). A GB1/RHD3-type G domain is found at 47–277 (GFNYHLISVF…FVGGVFLPEY (231 aa)). 57-64 (GSQSTGKS) is a binding site for GTP. A helical membrane pass occupies residues 734-754 (VPLYFWIALFAFGWNEIWMVI). Over 755–757 (RNP) the chain is Lumenal. Residues 758–778 (FLFILLLLSAGGTYVAYNLSL) traverse the membrane as a helical segment. At 779–848 (LGPMMQMTNA…KKKDYDDDGI (70 aa)) the chain is on the cytoplasmic side. Positions 815-848 (LAMPASSKSSGGEQVRMDTLDSKGKKKDYDDDGI) are disordered. The span at 829-848 (VRMDTLDSKGKKKDYDDDGI) shows a compositional bias: basic and acidic residues.

It belongs to the TRAFAC class dynamin-like GTPase superfamily. GB1/RHD3 GTPase family. RHD3 subfamily.

The protein resides in the endoplasmic reticulum membrane. Its function is as follows. Cooperates with the reticulon proteins and tubule-shaping DP1 family proteins to generate and maintain the structure of the tubular endoplasmic reticulum network. Has GTPase activity, which is required for its function in ER organization. The protein is Protein SEY1 of Pyricularia oryzae (strain 70-15 / ATCC MYA-4617 / FGSC 8958) (Rice blast fungus).